Here is a 267-residue protein sequence, read N- to C-terminus: Small ribosomal subunit protein uS3 (267 aa).

The KH type-2 domain maps to 43–111; that stretch reads IRKEMSKDLE…QVQLNIFEVK (69 aa). The disordered stretch occupies residues 216 to 267; it reads FEEQQAQQNNRPGRRGGDRRPRRGNRSAAPQAAEAPKAEAPAEAAPAAETKE. Over residues 241–267 the composition is skewed to low complexity; it reads RSAAPQAAEAPKAEAPAEAAPAAETKE.

It belongs to the universal ribosomal protein uS3 family. Part of the 30S ribosomal subunit. Forms a tight complex with proteins S10 and S14.

Its function is as follows. Binds the lower part of the 30S subunit head. Binds mRNA in the 70S ribosome, positioning it for translation. The sequence is that of Small ribosomal subunit protein uS3 from Bifidobacterium longum subsp. infantis (strain ATCC 15697 / DSM 20088 / JCM 1222 / NCTC 11817 / S12).